Reading from the N-terminus, the 551-residue chain is Glucans biosynthesis protein D (551 aa).

Residues 1 to 32 constitute a signal peptide (tat-type signal); the sequence is MNRRRFIKGSMAMAAVCGSSGIASLFSQAAFA.

The protein belongs to the OpgD/OpgG family. Post-translationally, predicted to be exported by the Tat system. The position of the signal peptide cleavage has not been experimentally proven.

The protein localises to the periplasm. It participates in glycan metabolism; osmoregulated periplasmic glucan (OPG) biosynthesis. In terms of biological role, probably involved in the control of the structural glucose backbone of osmoregulated periplasmic glucans (OPGs). This chain is Glucans biosynthesis protein D, found in Salmonella enteritidis PT4 (strain P125109).